The chain runs to 682 residues: MSRKQLALFEPTLVVQALKEAVKKLNPQAQWRNPVMFIVWIGSLLTTCISIAMASGAMPGNALFSAAISGWLWITVLFANFAEALAEGRSKAQANSLKGVKKTAFARKLREPKYGAVADKVPADQLRKGDIVLVEAGDIIPCDGEVIEGGASVDESAITGESAPVIRESGGDFASVTGGTRILSDWLVIECSVNPGETFLDRMIAMVEGAQRRKTPNEIALTILLIALTIVFLLATATLWPFSAWGGNAVSVTVLVALLVCLIPTTIGGLLSAIGVAGMSRMLGANVIATSGRAVEAAGDVDVLLLDKTGTITLGNRQASEFIPAQGVDEKTLADAAQLASLADETPEGRSIVILAKQRFNLRERDVQSLHATFVPFTAQSRMSGINIDNRMIRKGSVDAIRRHVEANGGHFPADVDQKVDQVARQGATPLVVVEGSRVLGVIALKDIVKGGIKERFAQLRKMGIKTVMITGDNRLTAAAIAAEAGVDDFLAEATPEAKLALIRQYQAEGRLVAMTGDGTNDAPALAQADVAVAMNSGTQAAKEAGNMVDLDSNPTKLIEVVHIGKQMLMTRGSLTTFSIANDVAKYFAIIPAAFAATYPQLNALNIMRLHSPDSAILSAVIFNALIIVFLIPLALKGVSYKPLTASAMLRRNLWIYGLGGLLVPFIGIKVIDLLLTVCGLV.

The next 4 membrane-spanning stretches (helical) occupy residues 34–54 (PVMFIVWIGSLLTTCISIAMA), 62–82 (ALFSAAISGWLWITVLFANFA), 219–239 (IALTILLIALTIVFLLATATL), and 254–274 (VLVALLVCLIPTTIGGLLSAI). Aspartate 307 functions as the 4-aspartylphosphate intermediate in the catalytic mechanism. Residues aspartate 344, glutamate 348, 377-384 (FTAQSRMS), and lysine 395 each bind ATP. Aspartate 518 and aspartate 522 together coordinate Mg(2+). Helical transmembrane passes span 588 to 608 (FAIIPAAFAATYPQLNALNIM), 616 to 636 (AILSAVIFNALIIVFLIPLAL), and 656 to 676 (IYGLGGLLVPFIGIKVIDLLL).

Belongs to the cation transport ATPase (P-type) (TC 3.A.3) family. Type IA subfamily. In terms of assembly, the system is composed of three essential subunits: KdpA, KdpB and KdpC.

The protein localises to the cell inner membrane. The catalysed reaction is K(+)(out) + ATP + H2O = K(+)(in) + ADP + phosphate + H(+). Part of the high-affinity ATP-driven potassium transport (or Kdp) system, which catalyzes the hydrolysis of ATP coupled with the electrogenic transport of potassium into the cytoplasm. This subunit is responsible for energy coupling to the transport system and for the release of the potassium ions to the cytoplasm. This chain is Potassium-transporting ATPase ATP-binding subunit, found in Escherichia coli O9:H4 (strain HS).